A 952-amino-acid chain; its full sequence is Isoleucine--tRNA ligase (952 aa).

Positions 58–68 (PYANGDIHIGH) match the 'HIGH' region motif. Glutamate 576 serves as a coordination point for L-isoleucyl-5'-AMP. Positions 617-621 (KMSKS) match the 'KMSKS' region motif. Residue lysine 620 participates in ATP binding. The Zn(2+) site is built by cysteine 915, cysteine 918, cysteine 935, and cysteine 938.

This sequence belongs to the class-I aminoacyl-tRNA synthetase family. IleS type 1 subfamily. As to quaternary structure, monomer. Zn(2+) is required as a cofactor.

It localises to the cytoplasm. It catalyses the reaction tRNA(Ile) + L-isoleucine + ATP = L-isoleucyl-tRNA(Ile) + AMP + diphosphate. Its function is as follows. Catalyzes the attachment of isoleucine to tRNA(Ile). As IleRS can inadvertently accommodate and process structurally similar amino acids such as valine, to avoid such errors it has two additional distinct tRNA(Ile)-dependent editing activities. One activity is designated as 'pretransfer' editing and involves the hydrolysis of activated Val-AMP. The other activity is designated 'posttransfer' editing and involves deacylation of mischarged Val-tRNA(Ile). The polypeptide is Isoleucine--tRNA ligase (Vibrio atlanticus (strain LGP32) (Vibrio splendidus (strain Mel32))).